The chain runs to 337 residues: MAIELLYDADADLSIIQGRKVAVIGYGSQGHAHAQCLRDSGVEVVIGLREGSKSSEKAQEAGFEVKSNADAAAWADVIMLLAPDTSQAEIFSHDIEPNLKDGDALLFGHGLNIHFELIKPAVNITVGMVAPKGPGHLVRRQFVDGKGVPCLIAVAQDPKGEGKDLALSYAAAIGGARAGVIPTTFREETETDLFGEQVVLCGGLEHLMMKGFEVLAEAGYAPEMAYFEVLHEMKLIVDLIWEGGIENMNYSISETAELGGYVAGPRIITPEVKENMKAVLADIQSGKFVRDMVADVEAGQPELKRYREEIAAHPIEATGSKLRDLMSWVKNPLDETA.

Positions 3–183 constitute a KARI N-terminal Rossmann domain; sequence IELLYDADAD…GGARAGVIPT (181 aa). Residues 26–29, arginine 49, serine 52, serine 54, and 84–87 contribute to the NADP(+) site; these read YGSQ and DTSQ. Residue histidine 109 is part of the active site. An NADP(+)-binding site is contributed by glycine 135. In terms of domain architecture, KARI C-terminal knotted spans 184-329; sequence TFREETETDL…SKLRDLMSWV (146 aa). Mg(2+) contacts are provided by aspartate 192, glutamate 196, glutamate 228, and glutamate 232. Serine 253 contacts substrate.

Belongs to the ketol-acid reductoisomerase family. Mg(2+) serves as cofactor.

It catalyses the reaction (2R)-2,3-dihydroxy-3-methylbutanoate + NADP(+) = (2S)-2-acetolactate + NADPH + H(+). The enzyme catalyses (2R,3R)-2,3-dihydroxy-3-methylpentanoate + NADP(+) = (S)-2-ethyl-2-hydroxy-3-oxobutanoate + NADPH + H(+). The protein operates within amino-acid biosynthesis; L-isoleucine biosynthesis; L-isoleucine from 2-oxobutanoate: step 2/4. It functions in the pathway amino-acid biosynthesis; L-valine biosynthesis; L-valine from pyruvate: step 2/4. Functionally, involved in the biosynthesis of branched-chain amino acids (BCAA). Catalyzes an alkyl-migration followed by a ketol-acid reduction of (S)-2-acetolactate (S2AL) to yield (R)-2,3-dihydroxy-isovalerate. In the isomerase reaction, S2AL is rearranged via a Mg-dependent methyl migration to produce 3-hydroxy-3-methyl-2-ketobutyrate (HMKB). In the reductase reaction, this 2-ketoacid undergoes a metal-dependent reduction by NADPH to yield (R)-2,3-dihydroxy-isovalerate. The polypeptide is Ketol-acid reductoisomerase (NADP(+)) (Corynebacterium diphtheriae (strain ATCC 700971 / NCTC 13129 / Biotype gravis)).